The following is a 187-amino-acid chain: Large ribosomal subunit protein uL5 (187 aa).

It belongs to the universal ribosomal protein uL5 family. Part of the 50S ribosomal subunit; part of the 5S rRNA/L5/L18/L25 subcomplex. Contacts the 5S rRNA and the P site tRNA. Forms a bridge to the 30S subunit in the 70S ribosome.

In terms of biological role, this is one of the proteins that bind and probably mediate the attachment of the 5S RNA into the large ribosomal subunit, where it forms part of the central protuberance. In the 70S ribosome it contacts protein S13 of the 30S subunit (bridge B1b), connecting the 2 subunits; this bridge is implicated in subunit movement. Contacts the P site tRNA; the 5S rRNA and some of its associated proteins might help stabilize positioning of ribosome-bound tRNAs. This chain is Large ribosomal subunit protein uL5, found in Corynebacterium diphtheriae (strain ATCC 700971 / NCTC 13129 / Biotype gravis).